The chain runs to 233 residues: LexA repressor (233 aa).

The H-T-H motif DNA-binding region spans 26-46 (FEEMKEALDLKSKSGVHRLIS). Catalysis depends on for autocatalytic cleavage activity residues S153 and K191.

It belongs to the peptidase S24 family. In terms of assembly, homodimer.

It catalyses the reaction Hydrolysis of Ala-|-Gly bond in repressor LexA.. Represses a number of genes involved in the response to DNA damage (SOS response), including recA and lexA. In the presence of single-stranded DNA, RecA interacts with LexA causing an autocatalytic cleavage which disrupts the DNA-binding part of LexA, leading to derepression of the SOS regulon and eventually DNA repair. The sequence is that of LexA repressor from Erythrobacter litoralis (strain HTCC2594).